We begin with the raw amino-acid sequence, 527 residues long: tRNA-2-methylthio-N(6)-dimethylallyladenosine synthase (527 aa).

Residues 1–27 form a disordered region; sequence MMNEKQRLQYTAQIETDHPTDKKSALD. The span at 15 to 27 shows a compositional bias: basic and acidic residues; that stretch reads ETDHPTDKKSALD. Residues 84-202 enclose the MTTase N-terminal domain; the sequence is RKFYIRTYGC…LPYILKEAYM (119 aa). [4Fe-4S] cluster contacts are provided by C93, C129, C163, C239, C243, and C246. Residues 225-455 enclose the Radical SAM core domain; the sequence is RKGNIKAWVN…NALVNEISAK (231 aa). The 64-residue stretch at 458–521 folds into the TRAM domain; that stretch reads KEYEGQVVEV…TWTLNGEMVE (64 aa).

This sequence belongs to the methylthiotransferase family. MiaB subfamily. As to quaternary structure, monomer. Requires [4Fe-4S] cluster as cofactor.

The protein resides in the cytoplasm. The enzyme catalyses N(6)-dimethylallyladenosine(37) in tRNA + (sulfur carrier)-SH + AH2 + 2 S-adenosyl-L-methionine = 2-methylsulfanyl-N(6)-dimethylallyladenosine(37) in tRNA + (sulfur carrier)-H + 5'-deoxyadenosine + L-methionine + A + S-adenosyl-L-homocysteine + 2 H(+). Functionally, catalyzes the methylthiolation of N6-(dimethylallyl)adenosine (i(6)A), leading to the formation of 2-methylthio-N6-(dimethylallyl)adenosine (ms(2)i(6)A) at position 37 in tRNAs that read codons beginning with uridine. The polypeptide is tRNA-2-methylthio-N(6)-dimethylallyladenosine synthase (Anoxybacillus flavithermus (strain DSM 21510 / WK1)).